We begin with the raw amino-acid sequence, 311 residues long: Acetyl-coenzyme A carboxylase carboxyl transferase subunit alpha (311 aa).

The 251-residue stretch at 36 to 286 (ELKKEVERVY…VNYFLKSLEE (251 aa)) folds into the CoA carboxyltransferase C-terminal domain.

The protein belongs to the AccA family. As to quaternary structure, acetyl-CoA carboxylase is a heterohexamer composed of biotin carboxyl carrier protein (AccB), biotin carboxylase (AccC) and two subunits each of ACCase subunit alpha (AccA) and ACCase subunit beta (AccD).

It localises to the cytoplasm. It catalyses the reaction N(6)-carboxybiotinyl-L-lysyl-[protein] + acetyl-CoA = N(6)-biotinyl-L-lysyl-[protein] + malonyl-CoA. It functions in the pathway lipid metabolism; malonyl-CoA biosynthesis; malonyl-CoA from acetyl-CoA: step 1/1. Component of the acetyl coenzyme A carboxylase (ACC) complex. First, biotin carboxylase catalyzes the carboxylation of biotin on its carrier protein (BCCP) and then the CO(2) group is transferred by the carboxyltransferase to acetyl-CoA to form malonyl-CoA. The sequence is that of Acetyl-coenzyme A carboxylase carboxyl transferase subunit alpha from Wolinella succinogenes (strain ATCC 29543 / DSM 1740 / CCUG 13145 / JCM 31913 / LMG 7466 / NCTC 11488 / FDC 602W) (Vibrio succinogenes).